The following is a 443-amino-acid chain: UDP-N-acetylmuramate--L-alanine ligase (443 aa).

110–116 (GAHGKTS) contributes to the ATP binding site.

This sequence belongs to the MurCDEF family.

It localises to the cytoplasm. The catalysed reaction is UDP-N-acetyl-alpha-D-muramate + L-alanine + ATP = UDP-N-acetyl-alpha-D-muramoyl-L-alanine + ADP + phosphate + H(+). Its pathway is cell wall biogenesis; peptidoglycan biosynthesis. Cell wall formation. This Lactococcus lactis subsp. cremoris (strain MG1363) protein is UDP-N-acetylmuramate--L-alanine ligase.